Consider the following 2465-residue polypeptide: Serine/threonine-protein kinase TOR (2465 aa).

HEAT repeat units lie at residues 184 to 221 (VHVP…VIEK), 271 to 308 (SRYR…FLRD), 348 to 389 (AELV…AMGP), 549 to 587 (RLVE…FDDF), 588 to 625 (LAQA…KNPA), 717 to 755 (QYLP…STGY), 761 to 799 (NEYP…LDPH), 888 to 926 (PYLP…IVRQ), 981 to 1018 (MYIL…VFGG), 1022 to 1059 (EHMH…TVQV), and 1061 to 1098 (THVS…ALGE). The disordered stretch occupies residues 1158-1191 (DFGGVPSEEADETQRQPRSHQVNDVRLRSAGEAS). The 581-residue stretch at 1297–1877 (LLGALAEKCR…MYPLLVACKS (581 aa)) folds into the FAT domain. Positions 2051–2369 (FVPQLIVITS…PPRGAREREL (319 aa)) constitute a PI3K/PI4K catalytic domain. The interval 2057 to 2063 (VITSKQR) is G-loop. The catalytic loop stretch occupies residues 2230 to 2238 (GLGDRHPSN). The activation loop stretch occupies residues 2250-2275 (HIDFGDCFEASMNREKFPEKVPFRLT). The segment at 2401 to 2431 (RDFSSGSSLSGAGSSTQHGNEHLASGDTREV) is disordered. Residues 2404–2415 (SSGSSLSGAGSS) are compositionally biased toward low complexity. The FATC domain maps to 2433 to 2465 (PGLSVKVQVQRLILQATSHENLCQNYVGWCPFW).

The protein belongs to the PI3/PI4-kinase family. The target of rapamycin complex 1 (TORC1) is composed of at least RAPTOR, LST8 and TOR.

It catalyses the reaction L-seryl-[protein] + ATP = O-phospho-L-seryl-[protein] + ADP + H(+). The catalysed reaction is L-threonyl-[protein] + ATP = O-phospho-L-threonyl-[protein] + ADP + H(+). With respect to regulation, insensitive to inhibition by rapamycin. Its function is as follows. Component of TORC1 complex, which is an essential cell growth regulator that controls plant development. Acts through the phosphorylation of downstream effectors that are recruited by the binding partner RAPTOR. Acts by activating transcription, protein synthesis and ribosome biogenesis, and inhibiting mRNA degradation and autophagy. The chain is Serine/threonine-protein kinase TOR from Oryza sativa subsp. japonica (Rice).